Consider the following 217-residue polypeptide: Probable chemoreceptor glutamine deamidase CheD (217 aa).

The segment at 194-217 (ATSGTAPSRGGELFTRASASRTPS) is disordered.

It belongs to the CheD family.

It carries out the reaction L-glutaminyl-[protein] + H2O = L-glutamyl-[protein] + NH4(+). Functionally, probably deamidates glutamine residues to glutamate on methyl-accepting chemotaxis receptors (MCPs), playing an important role in chemotaxis. The polypeptide is Probable chemoreceptor glutamine deamidase CheD (Cupriavidus pinatubonensis (strain JMP 134 / LMG 1197) (Cupriavidus necator (strain JMP 134))).